Here is a 96-residue protein sequence, read N- to C-terminus: Small ribosomal subunit protein bS6 (96 aa).

It belongs to the bacterial ribosomal protein bS6 family.

Binds together with bS18 to 16S ribosomal RNA. The chain is Small ribosomal subunit protein bS6 from Streptomyces griseus subsp. griseus (strain JCM 4626 / CBS 651.72 / NBRC 13350 / KCC S-0626 / ISP 5235).